A 638-amino-acid polypeptide reads, in one-letter code: Threonine--tRNA ligase (638 aa).

Residues 1–61 enclose the TGS domain; sequence MPVITLPDGS…DADAQLQIIT (61 aa). Positions 243–534 are catalytic; it reads DHRKIGKALN…LTEEFAGFFP (292 aa). Residues cysteine 334, histidine 385, and histidine 511 each coordinate Zn(2+).

Belongs to the class-II aminoacyl-tRNA synthetase family. Homodimer. Zn(2+) serves as cofactor.

It is found in the cytoplasm. It carries out the reaction tRNA(Thr) + L-threonine + ATP = L-threonyl-tRNA(Thr) + AMP + diphosphate + H(+). Catalyzes the attachment of threonine to tRNA(Thr) in a two-step reaction: L-threonine is first activated by ATP to form Thr-AMP and then transferred to the acceptor end of tRNA(Thr). Also edits incorrectly charged L-seryl-tRNA(Thr). This chain is Threonine--tRNA ligase, found in Alteromonas mediterranea (strain DSM 17117 / CIP 110805 / LMG 28347 / Deep ecotype).